Consider the following 210-residue polypeptide: Transcription factor ALC (210 aa).

The tract at residues 1–49 (MGDSDVGDRLPPPSSSDELSSFLRQILSRTPTAQPSSPPKSTNVSSAET) is disordered. The span at 27–48 (LSRTPTAQPSSPPKSTNVSSAE) shows a compositional bias: polar residues. Residues 93–142 (IDAQFHNLSEKKRRSKINEKMKALQKLIPNSNKTDKASMLDEAIEYLKQL) enclose the bHLH domain.

In terms of assembly, homodimer. As to expression, expressed constitutively in roots, leaves, stems, and flowers. Confined to the valve margins of the silique.

The protein localises to the nucleus. Functionally, required for the dehiscence of fruit, especially for the separation of the valve cells from the replum. Promotes the differentiation of a strip of labile nonlignified cells sandwiched between layers of lignified cells. This is Transcription factor ALC (ALC) from Arabidopsis thaliana (Mouse-ear cress).